The sequence spans 63 residues: DNA gyrase inhibitor YacG (63 aa).

4 residues coordinate Zn(2+): cysteine 9, cysteine 12, cysteine 28, and cysteine 32.

The protein belongs to the DNA gyrase inhibitor YacG family. In terms of assembly, interacts with GyrB. The cofactor is Zn(2+).

Functionally, inhibits all the catalytic activities of DNA gyrase by preventing its interaction with DNA. Acts by binding directly to the C-terminal domain of GyrB, which probably disrupts DNA binding by the gyrase. This is DNA gyrase inhibitor YacG from Salmonella paratyphi A (strain AKU_12601).